Here is a 310-residue protein sequence, read N- to C-terminus: Mitochondrial citrate transporter F (310 aa).

Solcar repeat units follow at residues 23–108 (KKVH…LKNH), 115–207 (PPGL…FKRL), and 216–303 (DNMG…HKKL). 6 helical membrane-spanning segments follow: residues 29-49 (FWFG…LDLV), 85-105 (SAAI…YEEL), 122-142 (IGMA…ADVL), 186-206 (NSTR…TFKR), 222-242 (FTAS…VDVI), and 275-296 (AFRG…TFIF).

The protein belongs to the mitochondrial carrier (TC 2.A.29) family.

Its subcellular location is the mitochondrion inner membrane. Mitochondrial transporter that does not mediate citrate export from mitochondria to cytoplasm. Its exact function has still to be determined. This chain is Mitochondrial citrate transporter F, found in Aspergillus niger (strain ATCC 1015 / CBS 113.46 / FGSC A1144 / LSHB Ac4 / NCTC 3858a / NRRL 328 / USDA 3528.7).